A 101-amino-acid polypeptide reads, in one-letter code: Protein Tat (101 aa).

The tract at residues 1 to 24 is interaction with human CREBBP; it reads MEPIDPNLEPWNHPGSQPKTACNN. The interval 1-48 is transactivation; that stretch reads MEPIDPNLEPWNHPGSQPKTACNNCYCKQCCYHCQLCFTKKGLGISYG. Cysteine 22, cysteine 25, and cysteine 27 together coordinate Zn(2+). The tract at residues 22-37 is cysteine-rich; it reads CNNCYCKQCCYHCQLC. Lysine 28 bears the N6-acetyllysine; by host PCAF mark. Zn(2+) is bound by residues cysteine 30, histidine 33, cysteine 34, and cysteine 37. A core region spans residues 38–48; the sequence is FTKKGLGISYG. The segment at 48–101 is disordered; the sequence is GRRKRKQRRRTSESSQNHQDPVPKQPLSQPGGIETGQKKSKKEVESQTTSDQFA. The Nuclear localization signal, RNA-binding (TAR), and protein transduction motif lies at 49–57; the sequence is RRKRKQRRR. Positions 49-86 are interaction with the host capping enzyme RNGTT; that stretch reads RRKRKQRRRTSESSQNHQDPVPKQPLSQPGGIETGQKK. Lysine 51 carries the N6-acetyllysine; by host EP300 and GCN5L2 modification. Position 52 is an asymmetric dimethylarginine; by host PRMT6 (arginine 52). A Glycyl lysine isopeptide (Lys-Gly) (interchain with G-Cter in ubiquitin) cross-link involves residue lysine 71.

It belongs to the lentiviruses Tat family. Interacts with host CCNT1. Associates with the P-TEFb complex composed at least of Tat, P-TEFb (CDK9 and CCNT1), TAR RNA, RNA Pol II. Recruits the HATs CREBBP, TAF1/TFIID, EP300, PCAF and GCN5L2. Interacts with host KAT5/Tip60; this interaction targets the latter to degradation. Interacts with the host deacetylase SIRT1. Interacts with host capping enzyme RNGTT; this interaction stimulates RNGTT. Binds to host KDR, and to the host integrins ITGAV/ITGB3 and ITGA5/ITGB1. Interacts with host KPNB1/importin beta-1 without previous binding to KPNA1/importin alpha-1. Interacts with EIF2AK2. Interacts with host nucleosome assembly protein NAP1L1; this interaction may be required for the transport of Tat within the nucleus, since the two proteins interact at the nuclear rim. Interacts with host C1QBP/SF2P32; this interaction involves lysine-acetylated Tat. Interacts with the host chemokine receptors CCR2, CCR3 and CXCR4. Interacts with host DPP4/CD26; this interaction may trigger an anti-proliferative effect. Interacts with host LDLR. Interacts with the host extracellular matrix metalloproteinase MMP1. Interacts with host PRMT6; this interaction mediates Tat's methylation. Interacts with, and is ubiquitinated by MDM2/Hdm2. Interacts with host PSMC3 and HTATIP2. Interacts with STAB1; this interaction may overcome SATB1-mediated repression of IL2 and IL2RA (interleukin) in T cells by binding to the same domain than HDAC1. Interacts (when acetylated) with human CDK13, thereby increasing HIV-1 mRNA splicing and promoting the production of the doubly spliced HIV-1 protein Nef. Interacts with host TBP; this interaction modulates the activity of transcriptional pre-initiation complex. Interacts with host RELA. Asymmetrical arginine methylation by host PRMT6 seems to diminish the transactivation capacity of Tat and affects the interaction with host CCNT1. Post-translationally, polyubiquitination by host MDM2 does not target Tat to degradation, but activates its transactivation function and fosters interaction with CCNT1 and TAR RNA. In terms of processing, phosphorylated by EIF2AK2 on serine and threonine residues adjacent to the basic region important for TAR RNA binding and function. Phosphorylation of Tat by EIF2AK2 is dependent on the prior activation of EIF2AK2 by dsRNA.

Its subcellular location is the host nucleus. It localises to the host nucleolus. The protein resides in the host cytoplasm. It is found in the secreted. In terms of biological role, transcriptional activator that increases RNA Pol II processivity, thereby increasing the level of full-length viral transcripts. Recognizes a hairpin structure at the 5'-LTR of the nascent viral mRNAs referred to as the transactivation responsive RNA element (TAR) and recruits the cyclin T1-CDK9 complex (P-TEFb complex) that will in turn hyperphosphorylate the RNA polymerase II to allow efficient elongation. The CDK9 component of P-TEFb and other Tat-activated kinases hyperphosphorylate the C-terminus of RNA Pol II that becomes stabilized and much more processive. Other factors such as HTATSF1/Tat-SF1, SUPT5H/SPT5, and HTATIP2 are also important for Tat's function. Besides its effect on RNA Pol II processivity, Tat induces chromatin remodeling of proviral genes by recruiting the histone acetyltransferases (HATs) CREBBP, EP300 and PCAF to the chromatin. This also contributes to the increase in proviral transcription rate, especially when the provirus integrates in transcriptionally silent region of the host genome. To ensure maximal activation of the LTR, Tat mediates nuclear translocation of NF-kappa-B by interacting with host RELA. Through its interaction with host TBP, Tat may also modulate transcription initiation. Tat can reactivate a latently infected cell by penetrating in it and transactivating its LTR promoter. In the cytoplasm, Tat is thought to act as a translational activator of HIV-1 mRNAs. Extracellular circulating Tat can be endocytosed by surrounding uninfected cells via the binding to several surface receptors such as CD26, CXCR4, heparan sulfate proteoglycans (HSPG) or LDLR. Neurons are rarely infected, but they internalize Tat via their LDLR. Through its interaction with nuclear HATs, Tat is potentially able to control the acetylation-dependent cellular gene expression. Modulates the expression of many cellular genes involved in cell survival, proliferation or in coding for cytokines or cytokine receptors. Tat plays a role in T-cell and neurons apoptosis. Tat induced neurotoxicity and apoptosis probably contribute to neuroAIDS. Circulating Tat also acts as a chemokine-like and/or growth factor-like molecule that binds to specific receptors on the surface of the cells, affecting many cellular pathways. In the vascular system, Tat binds to ITGAV/ITGB3 and ITGA5/ITGB1 integrins dimers at the surface of endothelial cells and competes with bFGF for heparin-binding sites, leading to an excess of soluble bFGF. This is Protein Tat from Pan troglodytes (Chimpanzee).